The primary structure comprises 68 residues: Small ribosomal subunit protein bS21 (68 aa).

The interval 35–68 (HYEKPSEKRARERAAAVRRARKMERKRMERDGIK) is disordered. Basic and acidic residues predominate over residues 37–49 (EKPSEKRARERAA). The segment covering 50 to 59 (AVRRARKMER) has biased composition (basic residues).

Belongs to the bacterial ribosomal protein bS21 family.

The chain is Small ribosomal subunit protein bS21 from Sphingopyxis alaskensis (strain DSM 13593 / LMG 18877 / RB2256) (Sphingomonas alaskensis).